The following is a 123-amino-acid chain: Urotensin-2 (123 aa).

A signal peptide spans 1–20; the sequence is MDRVPFCCLLFIGLLNPLLS. Propeptides lie at residues 21–104 and 107–109; these read LPVT…LART and QHK. Positions 57–88 are disordered; it reads RQTMGTEAGESPGEAGPSTETPTPRGSMRKAF. A disulfide bridge links Cys117 with Cys122.

This sequence belongs to the urotensin-2 family. Brain specific. Predominantly expressed in motoneurons of the brainstem and spinal cord.

Its subcellular location is the secreted. In terms of biological role, highly potent vasoconstrictor. This Mus musculus (Mouse) protein is Urotensin-2 (Uts2).